Consider the following 201-residue polypeptide: Small ribosomal subunit protein uS4c (201 aa).

Residues 15 to 44 (LGALPGLTNKRPRAGSDLRNQSRSGKKSQY) are disordered. Positions 89-149 (MRLDNILFRL…DEQNSRALIQ (61 aa)) constitute an S4 RNA-binding domain.

Belongs to the universal ribosomal protein uS4 family. In terms of assembly, part of the 30S ribosomal subunit. Contacts protein S5. The interaction surface between S4 and S5 is involved in control of translational fidelity.

It localises to the plastid. Its subcellular location is the chloroplast. Its function is as follows. One of the primary rRNA binding proteins, it binds directly to 16S rRNA where it nucleates assembly of the body of the 30S subunit. In terms of biological role, with S5 and S12 plays an important role in translational accuracy. The chain is Small ribosomal subunit protein uS4c (rps4) from Daucus carota (Wild carrot).